We begin with the raw amino-acid sequence, 532 residues long: Probable C4-dicarboxylate sensor kinase (532 aa).

Residues 1–12 (MRLFRQLSIQWK) lie on the Cytoplasmic side of the membrane. A helical transmembrane segment spans residues 13 to 33 (ITILSFGIVAFALMMVSISLL). Over 34–175 (GYVTSIKEDE…YADMIQEFWQ (142 aa)) the chain is Extracellular. Residues 176 to 196 (PALLIGLITALFGFWGSWLLA) form a helical membrane-spanning segment. Over 197–532 (SHIKRQTFNM…FSIYLPKKRG (336 aa)) the chain is Cytoplasmic. The 64-residue stretch at 216–279 (VERDASFNAI…PEILSIGKPL (64 aa)) folds into the PAS domain. The region spanning 315-531 (SDVDRLAEEL…TFSIYLPKKR (217 aa)) is the Histidine kinase domain. H339 carries the phosphohistidine; by autocatalysis modification.

It is found in the cell membrane. It carries out the reaction ATP + protein L-histidine = ADP + protein N-phospho-L-histidine.. Its function is as follows. Member of the two-component regulatory system DctS/DctR. Probably activates DctR by phosphorylation. Essential for expression of dctP. This is Probable C4-dicarboxylate sensor kinase (dctS) from Halalkalibacterium halodurans (strain ATCC BAA-125 / DSM 18197 / FERM 7344 / JCM 9153 / C-125) (Bacillus halodurans).